Reading from the N-terminus, the 672-residue chain is UvrABC system protein B (672 aa).

Residues 26 to 183 form the Helicase ATP-binding domain; sequence EGLEDGLAHQ…RRLSELQYVR (158 aa). 39–46 serves as a coordination point for ATP; that stretch reads GVTGSGKT. The Beta-hairpin signature appears at 92–115; that stretch reads YYDYYQPEAYVPSSDTFIEKDASV. A Helicase C-terminal domain is found at 431–597; it reads QVDDLLSEIN…ALNKKVTDIL (167 aa). A disordered region spans residues 601-623; it reads DGPVRSRTKGARGQRAAEPHPDY. The UVR domain occupies 632–667; the sequence is EQQIQRLETQMYQHAQNLEFEQAAALRDEIHILREQ.

Belongs to the UvrB family. As to quaternary structure, forms a heterotetramer with UvrA during the search for lesions. Interacts with UvrC in an incision complex.

It localises to the cytoplasm. In terms of biological role, the UvrABC repair system catalyzes the recognition and processing of DNA lesions. A damage recognition complex composed of 2 UvrA and 2 UvrB subunits scans DNA for abnormalities. Upon binding of the UvrA(2)B(2) complex to a putative damaged site, the DNA wraps around one UvrB monomer. DNA wrap is dependent on ATP binding by UvrB and probably causes local melting of the DNA helix, facilitating insertion of UvrB beta-hairpin between the DNA strands. Then UvrB probes one DNA strand for the presence of a lesion. If a lesion is found the UvrA subunits dissociate and the UvrB-DNA preincision complex is formed. This complex is subsequently bound by UvrC and the second UvrB is released. If no lesion is found, the DNA wraps around the other UvrB subunit that will check the other stand for damage. The chain is UvrABC system protein B from Edwardsiella ictaluri (strain 93-146).